The sequence spans 393 residues: NAD(P)H-quinone oxidoreductase subunit H, chloroplastic (393 aa).

Belongs to the complex I 49 kDa subunit family. In terms of assembly, NDH is composed of at least 16 different subunits, 5 of which are encoded in the nucleus.

Its subcellular location is the plastid. The protein resides in the chloroplast thylakoid membrane. The enzyme catalyses a plastoquinone + NADH + (n+1) H(+)(in) = a plastoquinol + NAD(+) + n H(+)(out). The catalysed reaction is a plastoquinone + NADPH + (n+1) H(+)(in) = a plastoquinol + NADP(+) + n H(+)(out). Functionally, NDH shuttles electrons from NAD(P)H:plastoquinone, via FMN and iron-sulfur (Fe-S) centers, to quinones in the photosynthetic chain and possibly in a chloroplast respiratory chain. The immediate electron acceptor for the enzyme in this species is believed to be plastoquinone. Couples the redox reaction to proton translocation, and thus conserves the redox energy in a proton gradient. This is NAD(P)H-quinone oxidoreductase subunit H, chloroplastic from Morus indica (Mulberry).